Reading from the N-terminus, the 164-residue chain is UPF0114 protein Sbal_0780 (164 aa).

A run of 4 helical transmembrane segments spans residues 15 to 35, 53 to 73, 109 to 129, and 136 to 156; these read IMAPIYLGLSLILFALGVKFF, LVLLTLSLIDITLVGGLIVMV, VAASIVAISSIHLLKVFMNAE, and IMWYLLIHITFVLSAFAMGYL.

Belongs to the UPF0114 family.

The protein resides in the cell membrane. The sequence is that of UPF0114 protein Sbal_0780 from Shewanella baltica (strain OS155 / ATCC BAA-1091).